A 41-amino-acid chain; its full sequence is Large ribosomal subunit protein bL36 (41 aa).

Belongs to the bacterial ribosomal protein bL36 family.

The chain is Large ribosomal subunit protein bL36 from Rhodopseudomonas palustris (strain BisB18).